The following is a 1888-amino-acid chain: Protein mms22 (1888 aa).

3 disordered regions span residues 12–34 (DSQD…RGNE), 151–258 (FSSD…ISSN), and 316–354 (RRKL…SRFD). 3 stretches are compositionally biased toward polar residues: residues 13-32 (SQDS…SQRG), 212-227 (SNLN…SSTI), and 338-348 (SDNSISTPTPT).

Belongs to the MMS22 family.

Its subcellular location is the nucleus. In terms of biological role, involved in protection against replication-dependent DNA damage. May act by restoring active replication forks, repairing unusual DNA structures, and/or preventing aberrant DNA rearrangement at arrested replication forks. The polypeptide is Protein mms22 (mus7) (Schizosaccharomyces pombe (strain 972 / ATCC 24843) (Fission yeast)).